Here is a 173-residue protein sequence, read N- to C-terminus: NADH-ubiquinone oxidoreductase chain 6 (173 aa).

5 helical membrane passes run 1-21 (MTYF…AVAS), 27-47 (YGVL…LSLG), 48-68 (VSFI…VVFV), 87-107 (VVIY…VGDF), and 139-159 (WGAG…FVVL).

It belongs to the complex I subunit 6 family.

It localises to the mitochondrion membrane. The catalysed reaction is a ubiquinone + NADH + 5 H(+)(in) = a ubiquinol + NAD(+) + 4 H(+)(out). Functionally, core subunit of the mitochondrial membrane respiratory chain NADH dehydrogenase (Complex I) that is believed to belong to the minimal assembly required for catalysis. Complex I functions in the transfer of electrons from NADH to the respiratory chain. The immediate electron acceptor for the enzyme is believed to be ubiquinone. This Struthio camelus (Common ostrich) protein is NADH-ubiquinone oxidoreductase chain 6 (MT-ND6).